A 264-amino-acid chain; its full sequence is 3-deoxy-manno-octulosonate cytidylyltransferase (264 aa).

This sequence belongs to the KdsB family.

It localises to the cytoplasm. It catalyses the reaction 3-deoxy-alpha-D-manno-oct-2-ulosonate + CTP = CMP-3-deoxy-beta-D-manno-octulosonate + diphosphate. It functions in the pathway nucleotide-sugar biosynthesis; CMP-3-deoxy-D-manno-octulosonate biosynthesis; CMP-3-deoxy-D-manno-octulosonate from 3-deoxy-D-manno-octulosonate and CTP: step 1/1. The protein operates within bacterial outer membrane biogenesis; lipopolysaccharide biosynthesis. Activates KDO (a required 8-carbon sugar) for incorporation into bacterial lipopolysaccharide in Gram-negative bacteria. The polypeptide is 3-deoxy-manno-octulosonate cytidylyltransferase (Marinomonas sp. (strain MWYL1)).